The sequence spans 353 residues: Protein-glutamate methylesterase/protein-glutamine glutaminase (353 aa).

The Response regulatory domain occupies Arg-6–Glu-123. Asp-57 bears the 4-aspartylphosphate mark. In terms of domain architecture, CheB-type methylesterase spans Ala-159–Arg-351. Residues Ser-171, His-197, and Asp-293 contribute to the active site.

Belongs to the CheB family. Phosphorylated by CheA. Phosphorylation of the N-terminal regulatory domain activates the methylesterase activity.

Its subcellular location is the cytoplasm. The enzyme catalyses [protein]-L-glutamate 5-O-methyl ester + H2O = L-glutamyl-[protein] + methanol + H(+). It carries out the reaction L-glutaminyl-[protein] + H2O = L-glutamyl-[protein] + NH4(+). Involved in chemotaxis. Part of a chemotaxis signal transduction system that modulates chemotaxis in response to various stimuli. Catalyzes the demethylation of specific methylglutamate residues introduced into the chemoreceptors (methyl-accepting chemotaxis proteins or MCP) by CheR. Also mediates the irreversible deamidation of specific glutamine residues to glutamic acid. In Syntrophotalea carbinolica (strain DSM 2380 / NBRC 103641 / GraBd1) (Pelobacter carbinolicus), this protein is Protein-glutamate methylesterase/protein-glutamine glutaminase.